The sequence spans 26 residues: Thrombin-like enzyme LmrSP-3 (26 aa).

Belongs to the peptidase S1 family. Snake venom subfamily. Expressed by the venom gland.

Its subcellular location is the secreted. Functionally, thrombin-like snake venom serine protease that cleaves alpha-chain of fibrinogen (FGA) releases only fibrinopeptide A. Shows coagulant, esterase and amidase activities. The chain is Thrombin-like enzyme LmrSP-3 from Lachesis muta rhombeata (Bushmaster).